We begin with the raw amino-acid sequence, 388 residues long: Lipid-A-disaccharide synthase (388 aa).

This sequence belongs to the LpxB family.

The catalysed reaction is a lipid X + a UDP-2-N,3-O-bis[(3R)-3-hydroxyacyl]-alpha-D-glucosamine = a lipid A disaccharide + UDP + H(+). It functions in the pathway bacterial outer membrane biogenesis; LPS lipid A biosynthesis. In terms of biological role, condensation of UDP-2,3-diacylglucosamine and 2,3-diacylglucosamine-1-phosphate to form lipid A disaccharide, a precursor of lipid A, a phosphorylated glycolipid that anchors the lipopolysaccharide to the outer membrane of the cell. The polypeptide is Lipid-A-disaccharide synthase (Burkholderia pseudomallei (strain 1710b)).